The primary structure comprises 642 residues: Threonine--tRNA ligase (642 aa).

The 61-residue stretch at methionine 1–threonine 61 folds into the TGS domain. The tract at residues aspartate 243–proline 534 is catalytic. Residues cysteine 334, histidine 385, and histidine 511 each coordinate Zn(2+).

The protein belongs to the class-II aminoacyl-tRNA synthetase family. As to quaternary structure, homodimer. Zn(2+) is required as a cofactor.

The protein resides in the cytoplasm. It carries out the reaction tRNA(Thr) + L-threonine + ATP = L-threonyl-tRNA(Thr) + AMP + diphosphate + H(+). Functionally, catalyzes the attachment of threonine to tRNA(Thr) in a two-step reaction: L-threonine is first activated by ATP to form Thr-AMP and then transferred to the acceptor end of tRNA(Thr). Also edits incorrectly charged L-seryl-tRNA(Thr). This chain is Threonine--tRNA ligase, found in Erwinia tasmaniensis (strain DSM 17950 / CFBP 7177 / CIP 109463 / NCPPB 4357 / Et1/99).